The chain runs to 262 residues: MSKHIPRKRFGQNFLQDASVIAGIVHAVNPQPDDIVIEIGPGLGAITKPLLARLKHLHVVEIDRDIIERLKAEHPADKLTIHAGDALAFDFASVSEAPLKIVGNLPYNISTPLLFHLASYGNRVTDMHFMLQKEVIERMVAEPSTADYGRLTVMLQYRFYMENILFVPPEAFWPPPKVDSAVVRMIPAPGRCGTARDEALLEKLVSQAFAQRRKTLRNNLKGLADAADLEALGIDPGLRPENLPVEDFVRLANHLHDKGARG.

S-adenosyl-L-methionine-binding residues include asparagine 13, leucine 15, glycine 40, glutamate 61, aspartate 85, and asparagine 104.

The protein belongs to the class I-like SAM-binding methyltransferase superfamily. rRNA adenine N(6)-methyltransferase family. RsmA subfamily.

It localises to the cytoplasm. The catalysed reaction is adenosine(1518)/adenosine(1519) in 16S rRNA + 4 S-adenosyl-L-methionine = N(6)-dimethyladenosine(1518)/N(6)-dimethyladenosine(1519) in 16S rRNA + 4 S-adenosyl-L-homocysteine + 4 H(+). Its function is as follows. Specifically dimethylates two adjacent adenosines (A1518 and A1519) in the loop of a conserved hairpin near the 3'-end of 16S rRNA in the 30S particle. May play a critical role in biogenesis of 30S subunits. The chain is Ribosomal RNA small subunit methyltransferase A from Chromobacterium violaceum (strain ATCC 12472 / DSM 30191 / JCM 1249 / CCUG 213 / NBRC 12614 / NCIMB 9131 / NCTC 9757 / MK).